We begin with the raw amino-acid sequence, 376 residues long: Probable allantoicase (376 aa).

Belongs to the allantoicase family.

The enzyme catalyses allantoate + H2O = (S)-ureidoglycolate + urea. It functions in the pathway nitrogen metabolism; (S)-allantoin degradation; (S)-ureidoglycolate from allantoate (aminidohydrolase route): step 1/1. This Streptomyces coelicolor (strain ATCC BAA-471 / A3(2) / M145) protein is Probable allantoicase.